The sequence spans 939 residues: Tyrosine-protein kinase Shark (939 aa).

Residues 10-106 form the SH2 1 domain; that stretch reads WYHGNLSREA…GLPTKLTVPL (97 aa). ANK repeat units follow at residues 153-185, 186-218, and 220-252; these read DGQT…SSDS, FGCQ…GRNI, and NGYV…PRTS. The SH2 2 domain occupies 288–403; that stretch reads WYHGTLTREE…GLPVSLKYPV (116 aa). Disordered stretches follow at residues 410-446 and 476-505; these read EVPS…QHPH and ALFD…SLAG. The span at 496 to 505 shows a compositional bias: polar residues; that stretch reads ESSVSGSLAG. Positions 662 to 921 constitute a Protein kinase domain; sequence LVLDREIGHG…PTFVYLTEFF (260 aa). ATP is bound by residues 668 to 676 and lysine 698; that span reads IGHGEFGSV. The active-site Proton acceptor is the aspartate 789. Tyrosine 927 is modified (phosphotyrosine).

It belongs to the protein kinase superfamily. Tyr protein kinase family. In terms of assembly, interacts with drpr; this is required for the recruitment of drpr and glial cells to severed axons and for the phagocytosis of axonal debris by glial cells following axon injury. As to expression, gastrulation embryos show expression in ectodermal cells along the cephalic furrow and ventral midline. Proctodeum, stomodeum and their derived structures (foregut, atrium, pharynx, esophagus and hindgut) continue to show expression from stage 8-9 to late embryos. Other ectodermally derived structures (frontal sac, salivary gland and labium) and developing tracheal system also show expression.

The protein localises to the cytoplasm. It carries out the reaction L-tyrosyl-[protein] + ATP = O-phospho-L-tyrosyl-[protein] + ADP + H(+). In terms of biological role, following axon injury, required for recruitment of drpr and glial cells to severed axons and for glial clearance of severed axons from the central nervous system. Together with Src42a and drpr, promotes the migration of macrophages to sites of wounding as part of a signaling cascade where Scr42a detects production of hydrogen peroxide at wound sites which triggers phosphorylation of drpr and subsequent recruitment and activation of shark. May be involved in signal transduction on the apical surface of ectodermal epithelial cells, regulating their polarity during invagination. Crumbs (crb) may be the intracellular signal. This chain is Tyrosine-protein kinase Shark, found in Drosophila melanogaster (Fruit fly).